The primary structure comprises 218 residues: 3-dehydroquinate dehydratase (218 aa).

3-dehydroquinate is bound by residues 29–31 and Arg-56; that span reads EFR. The active-site Proton donor/acceptor is the His-116. The active-site Schiff-base intermediate with substrate is Lys-142. 3 residues coordinate 3-dehydroquinate: Arg-180, Ser-200, and Gln-204.

This sequence belongs to the type-I 3-dehydroquinase family. In terms of assembly, homodimer.

The catalysed reaction is 3-dehydroquinate = 3-dehydroshikimate + H2O. The protein operates within metabolic intermediate biosynthesis; chorismate biosynthesis; chorismate from D-erythrose 4-phosphate and phosphoenolpyruvate: step 3/7. In terms of biological role, involved in the third step of the chorismate pathway, which leads to the biosynthesis of aromatic amino acids. Catalyzes the cis-dehydration of 3-dehydroquinate (DHQ) and introduces the first double bond of the aromatic ring to yield 3-dehydroshikimate. The polypeptide is 3-dehydroquinate dehydratase (Methanococcus maripaludis (strain C6 / ATCC BAA-1332)).